Reading from the N-terminus, the 268-residue chain is Ubiquinone biosynthesis protein COQ4 homolog, mitochondrial (268 aa).

Positions 171, 172, 175, and 187 each coordinate Zn(2+).

Belongs to the COQ4 family. As to quaternary structure, component of a multi-subunit COQ enzyme complex. The cofactor is Zn(2+).

It localises to the mitochondrion inner membrane. The enzyme catalyses a 4-hydroxy-3-methoxy-5-(all-trans-polyprenyl)benzoate + H(+) = a 2-methoxy-6-(all-trans-polyprenyl)phenol + CO2. It functions in the pathway cofactor biosynthesis; ubiquinone biosynthesis. Functionally, lyase that catalyzes the C1-decarboxylation of 4-hydroxy-3-methoxy-5-(all-trans-polyprenyl)benzoic acid into 2-methoxy-6-(all-trans-polyprenyl)phenol during ubiquinone biosynthesis. The chain is Ubiquinone biosynthesis protein COQ4 homolog, mitochondrial from Drosophila sechellia (Fruit fly).